The chain runs to 300 residues: ESX-5 secretion-associated protein EspG5 (300 aa).

The protein belongs to the EspG family. As to quaternary structure, interacts specifically with ESX-5-dependent PE/PPE proteins. Forms a 1:1:1 heterotrimeric complex with the PE25/PPE41 dimer, via PPE41. Binding of EspG5 does not cause conformational changes in the PE25/PPE41 dimer. Forms a 1:1:1 heterotrimeric complex with the PE8/PPE15 dimer, via PPE15.

It is found in the cytoplasm. Functionally, specific chaperone for cognate PE/PPE proteins. Plays an important role in preventing aggregation of PE/PPE dimers. This Mycobacterium tuberculosis (strain ATCC 25618 / H37Rv) protein is ESX-5 secretion-associated protein EspG5.